A 487-amino-acid polypeptide reads, in one-letter code: CUGBP Elav-like family member 1 (487 aa).

Methionine 1 bears the N-acetylmethionine mark. Threonine 4 is modified (phosphothreonine). RRM domains lie at 16 to 99 (IKMF…PADS) and 108 to 188 (RKLF…FADT). A Glycyl lysine isopeptide (Lys-Gly) (interchain with G-Cter in SUMO2) cross-link involves residue lysine 109. Serine 179 and serine 303 each carry phosphoserine. The segment at 277–310 (TPSGTNALTTSSSPLSVLTSSAGSSPSSSSSNSV) is disordered. The span at 283–310 (ALTTSSSPLSVLTSSAGSSPSSSSSNSV) shows a compositional bias: low complexity. Positions 402 to 480 (ANLFIYHLPQ…KRLKVQLKRS (79 aa)) constitute an RRM 3 domain.

This sequence belongs to the CELF/BRUNOL family. In terms of assembly, interacts with HNRNPH1; the interaction in RNA-dependent. Interacts with PARN. Component of an EIF2 complex at least composed of CELF1/CUGBP1, CALR, CALR3, EIF2S1, EIF2S2, HSP90B1 and HSPA5. Associates with polysomes.

It is found in the nucleus. It localises to the cytoplasm. Functionally, RNA-binding protein implicated in the regulation of several post-transcriptional events. Involved in pre-mRNA alternative splicing, mRNA translation and stability. Mediates exon inclusion and/or exclusion in pre-mRNA that are subject to tissue-specific and developmentally regulated alternative splicing. Specifically activates exon 5 inclusion of cardiac isoforms of TNNT2 during heart remodeling at the juvenile to adult transition. Acts both as an activator and as a repressor of a pair of coregulated exons: promotes inclusion of the smooth muscle (SM) exon but exclusion of the non-muscle (NM) exon in actinin pre-mRNAs. Activates SM exon 5 inclusion by antagonizing the repressive effect of PTB. Promotes exclusion of exon 11 of the INSR pre-mRNA. Inhibits, together with HNRNPH1, insulin receptor (IR) pre-mRNA exon 11 inclusion in myoblast. Increases translation and controls the choice of translation initiation codon of CEBPB mRNA. Increases mRNA translation of CEBPB in aging liver. Increases translation of CDKN1A mRNA by antagonizing the repressive effect of CALR3. Mediates rapid cytoplasmic mRNA deadenylation. Recruits the deadenylase PARN to the poly(A) tail of EDEN-containing mRNAs to promote their deadenylation. Required for completion of spermatogenesis. Binds to (CUG)n triplet repeats in the 3'-UTR of transcripts such as DMPK and to Bruno response elements (BREs). Binds to muscle-specific splicing enhancer (MSE) intronic sites flanking the alternative exon 5 of TNNT2 pre-mRNA. Binds to AU-rich sequences (AREs or EDEN-like) localized in the 3'-UTR of JUN and FOS mRNAs. Binds to the IR RNA. Binds to the 5'-region of CDKN1A and CEBPB mRNAs. Binds with the 5'-region of CEBPB mRNA in aging liver. May be a specific regulator of miRNA biogenesis. Binds to primary microRNA pri-MIR140 and, with CELF2, negatively regulates the processing to mature miRNA. In Rattus norvegicus (Rat), this protein is CUGBP Elav-like family member 1 (Celf1).